Consider the following 267-residue polypeptide: Acetylglutamate kinase (267 aa).

Substrate is bound by residues 53–54 (GG), R75, and N167.

It belongs to the acetylglutamate kinase family. ArgB subfamily.

Its subcellular location is the cytoplasm. It catalyses the reaction N-acetyl-L-glutamate + ATP = N-acetyl-L-glutamyl 5-phosphate + ADP. The protein operates within amino-acid biosynthesis; L-arginine biosynthesis; N(2)-acetyl-L-ornithine from L-glutamate: step 2/4. Functionally, catalyzes the ATP-dependent phosphorylation of N-acetyl-L-glutamate. This Shewanella pealeana (strain ATCC 700345 / ANG-SQ1) protein is Acetylglutamate kinase.